Here is a 472-residue protein sequence, read N- to C-terminus: PEP-dependent dihydroxyacetone kinase, phosphoryl donor subunit DhaM (472 aa).

The PTS EIIA type-4 domain maps to 1 to 135; that stretch reads MVNLVIVSHS…HALEAKREQL (135 aa). The active-site Tele-phosphohistidine intermediate is His-9. Residues 155-242 enclose the HPr domain; sequence ARSLAVVIKN…QLAEDNFGET (88 aa). The active-site Pros-phosphohistidine intermediate is the His-169. The tract at residues 264-472 is PTS EI-like, N-terminal part; it reads QPVLCTVQAK…VKTQRFNRQG (209 aa). The active-site Tele-phosphohistidine intermediate is the His-430.

Belongs to the PEP-utilizing enzyme family. In terms of assembly, homodimer. The dihydroxyacetone kinase complex is composed of a homodimer of DhaM, a homodimer of DhaK and the subunit DhaL.

The enzyme catalyses dihydroxyacetone + phosphoenolpyruvate = dihydroxyacetone phosphate + pyruvate. The protein operates within polyol metabolism; glycerol degradation. In terms of biological role, component of the dihydroxyacetone kinase complex, which is responsible for the phosphoenolpyruvate (PEP)-dependent phosphorylation of dihydroxyacetone. DhaM serves as the phosphoryl donor. Is phosphorylated by phosphoenolpyruvate in an EI- and HPr-dependent reaction, and a phosphorelay system on histidine residues finally leads to phosphoryl transfer to DhaL and dihydroxyacetone. The polypeptide is PEP-dependent dihydroxyacetone kinase, phosphoryl donor subunit DhaM (Escherichia coli (strain K12)).